A 1017-amino-acid polypeptide reads, in one-letter code: Probable calcium-transporting ATPase 8, plasma membrane-type (1017 aa).

Topologically, residues M1 to T153 are cytoplasmic. The next 2 helical transmembrane spans lie at L154 to W174 and G177 to V197. At S198–K228 the chain is on the cytoplasmic side. 2 consecutive transmembrane segments (helical) span residues I229–P249 and V331–L351. At V352 to T384 the chain is on the cytoplasmic side. Residues I385 to A405 form a helical membrane-spanning segment. D434 functions as the 4-aspartylphosphate intermediate in the catalytic mechanism. Mg(2+) contacts are provided by D736 and D740. Residues I803–A823 traverse the membrane as a helical segment. Residues V824 to Q825 lie on the Cytoplasmic side of the membrane. Transmembrane regions (helical) follow at residues L826 to P846 and S875 to I895. Residues K896–N938 are Cytoplasmic-facing. The next 2 membrane-spanning stretches (helical) occupy residues W939 to L959 and W973 to I993. Over P994–I1017 the chain is Cytoplasmic.

It belongs to the cation transport ATPase (P-type) (TC 3.A.3) family. Type IIB subfamily.

It is found in the membrane. It carries out the reaction Ca(2+)(in) + ATP + H2O = Ca(2+)(out) + ADP + phosphate + H(+). Its activity is regulated as follows. Activated by calmodulin. In terms of biological role, this magnesium-dependent enzyme catalyzes the hydrolysis of ATP coupled with the translocation of calcium from the cytosol out of the cell, into the endoplasmic reticulum, or into organelles. The chain is Probable calcium-transporting ATPase 8, plasma membrane-type from Oryza sativa subsp. japonica (Rice).